We begin with the raw amino-acid sequence, 332 residues long: Glycerol-3-phosphate dehydrogenase [NAD(P)+] (332 aa).

NADPH contacts are provided by Trp11, Arg30, and Lys108. Sn-glycerol 3-phosphate-binding residues include Lys108, Gly137, and Ser139. An NADPH-binding site is contributed by Ala141. 5 residues coordinate sn-glycerol 3-phosphate: Lys192, Asp245, Ser255, Arg256, and Asn257. The Proton acceptor role is filled by Lys192. Arg256 contacts NADPH. NADPH is bound by residues Val280 and Glu282.

It belongs to the NAD-dependent glycerol-3-phosphate dehydrogenase family.

The protein resides in the cytoplasm. The enzyme catalyses sn-glycerol 3-phosphate + NAD(+) = dihydroxyacetone phosphate + NADH + H(+). It catalyses the reaction sn-glycerol 3-phosphate + NADP(+) = dihydroxyacetone phosphate + NADPH + H(+). The protein operates within membrane lipid metabolism; glycerophospholipid metabolism. In terms of biological role, catalyzes the reduction of the glycolytic intermediate dihydroxyacetone phosphate (DHAP) to sn-glycerol 3-phosphate (G3P), the key precursor for phospholipid synthesis. This Burkholderia pseudomallei (strain 1710b) protein is Glycerol-3-phosphate dehydrogenase [NAD(P)+].